We begin with the raw amino-acid sequence, 430 residues long: Adenylosuccinate synthetase (430 aa).

GTP contacts are provided by residues 12 to 18 (GDEGKGK) and 40 to 42 (GHT). Aspartate 13 functions as the Proton acceptor in the catalytic mechanism. 2 residues coordinate Mg(2+): aspartate 13 and glycine 40. Residues 13–16 (DEGK), 38–41 (NAGH), threonine 130, arginine 144, glutamine 224, threonine 239, and arginine 303 contribute to the IMP site. The active-site Proton donor is histidine 41. 299–305 (TNTGRPR) contacts substrate. GTP contacts are provided by residues arginine 305, 331 to 333 (KLD), and 413 to 415 (STS).

Belongs to the adenylosuccinate synthetase family. As to quaternary structure, homodimer. Requires Mg(2+) as cofactor.

It localises to the cytoplasm. It carries out the reaction IMP + L-aspartate + GTP = N(6)-(1,2-dicarboxyethyl)-AMP + GDP + phosphate + 2 H(+). It participates in purine metabolism; AMP biosynthesis via de novo pathway; AMP from IMP: step 1/2. Functionally, plays an important role in the de novo pathway of purine nucleotide biosynthesis. Catalyzes the first committed step in the biosynthesis of AMP from IMP. The protein is Adenylosuccinate synthetase of Rhodopseudomonas palustris (strain HaA2).